We begin with the raw amino-acid sequence, 229 residues long: Prolactin (229 aa).

Residues Met1–Ser30 form the signal peptide. Cysteines 34 and 41 form a disulfide. 3 positions are modified to phosphoserine: Ser56, Ser64, and Ser120. Disulfide bonds link Cys88–Cys204 and Cys221–Cys229.

Belongs to the somatotropin/prolactin family. In terms of assembly, interacts with PRLR.

Its subcellular location is the secreted. Functionally, prolactin acts primarily on the mammary gland by promoting lactation. In Neovison vison (American mink), this protein is Prolactin (PRL).